The following is a 330-amino-acid chain: Probable UDP-3-O-acylglucosamine N-acyltransferase 1, mitochondrial (330 aa).

The transit peptide at 1-52 (MANSLRTLFSVSTHGVFLNKRSSYRVRKVFVGMPLRICSEIPRFVSVSCIRS) directs the protein to the mitochondrion. A UDP-N-acetyl-alpha-D-glucosamine-binding site is contributed by 160-162 (FGF). Hexadecanoate contacts are provided by aspartate 210 and glutamine 214. Histidine 217 acts as the Proton acceptor in catalysis. Residues asparagine 218, serine 236, and histidine 254 each contribute to the UDP-N-acetyl-alpha-D-glucosamine site.

It belongs to the transferase hexapeptide repeat family. LpxD subfamily. In terms of assembly, homotrimer.

The protein resides in the mitochondrion. The enzyme catalyses a UDP-3-O-[(3R)-3-hydroxyacyl]-alpha-D-glucosamine + a (3R)-hydroxyacyl-[ACP] = a UDP-2-N,3-O-bis[(3R)-3-hydroxyacyl]-alpha-D-glucosamine + holo-[ACP] + H(+). The protein operates within glycolipid biosynthesis; lipid IV(A) biosynthesis; lipid IV(A) from (3R)-3-hydroxytetradecanoyl-[acyl-carrier-protein] and UDP-N-acetyl-alpha-D-glucosamine: step 3/6. Functionally, involved in the biosynthesis of lipid A, a phosphorylated glycolipid that in bacteria anchors the lipopolysaccharide to the outer membrane of the cell. Lipid A-like molecules in plants may serve as structural components of the outer membranes of mitochondria and/or chloroplasts, or may be involved in signal transduction or plant defense responses. In Arabidopsis thaliana (Mouse-ear cress), this protein is Probable UDP-3-O-acylglucosamine N-acyltransferase 1, mitochondrial (LPXD1).